Reading from the N-terminus, the 490-residue chain is UDP-N-acetylmuramyl-tripeptide synthetase (490 aa).

Residue 113 to 119 (GTDGKTT) coordinates ATP. UDP-N-acetyl-alpha-D-muramoyl-L-alanyl-D-glutamate is bound by residues 158–159 (TT), Ser-185, and Arg-193. Residue Lys-225 is modified to N6-carboxylysine.

It belongs to the MurCDEF family. MurE subfamily. In terms of processing, carboxylation is probably crucial for Mg(2+) binding and, consequently, for the gamma-phosphate positioning of ATP.

Its subcellular location is the cytoplasm. It functions in the pathway cell wall biogenesis; peptidoglycan biosynthesis. In terms of biological role, catalyzes the addition of an amino acid to the nucleotide precursor UDP-N-acetylmuramoyl-L-alanyl-D-glutamate (UMAG) in the biosynthesis of bacterial cell-wall peptidoglycan. The sequence is that of UDP-N-acetylmuramyl-tripeptide synthetase from Deinococcus radiodurans (strain ATCC 13939 / DSM 20539 / JCM 16871 / CCUG 27074 / LMG 4051 / NBRC 15346 / NCIMB 9279 / VKM B-1422 / R1).